A 749-amino-acid chain; its full sequence is Protein SWAP (749 aa).

A dry CEEERYL region spans residues 8 to 124 (SNVHVQEYKD…RNDQRNAIGF (117 aa)). The span at 105-118 (EQEKEEEEKRRNDQ) shows a compositional bias: basic and acidic residues. The segment at 105–149 (EQEKEEEEKRRNDQRNAIGFDYGTGKVKARESDSEDEPFEPPEGI) is disordered. One copy of the SURP motif 1 repeat lies at 166 to 209 (IIEKTASFIVANGTQMEIVIKAKQRNNAEQFGFLEFDHRLNPFY). A disordered region spans residues 256–310 (HGSDSEDSDSDYELHPSLLSGGAKRPVTPEKPGAIGPRKKPVEPEKPPDFTLKPV). One copy of the SURP motif 2 repeat lies at 391–431 (ILNSYAEHVAQRGLEAEASLAAREDLQLHFMEPKSPYYSYY). Residues 458-478 (PAPPSAVSSPGPSSLMSLNLS) show a composition bias toward low complexity. Disordered stretches follow at residues 458–498 (PAPP…SSRL), 537–592 (LRND…QVDR), and 608–749 (KAKK…DRRR). Positions 538–552 (RNDEPRDESSFRFDP) are enriched in basic and acidic residues. Residues 560–569 (PSDTTANFSD) are compositionally biased toward polar residues. Residues 574–583 (FPPPTPPVIP) are compositionally biased toward pro residues. 2 stretches are compositionally biased toward basic and acidic residues: residues 608-659 (KAKK…RSLD) and 679-689 (EEMKRTDEDRE). Composition is skewed to basic residues over residues 690-704 (RKRHRKRSRSRRRSR) and 714-749 (EHKKSRKSGRHHRSRSRSSSRDRHRRNRSRSRDRRR).

Its function is as follows. It is a regulator of pre-mRNA splicing (and, possibly, of other RNA processing events). It may regulate its own expression at the level of RNA processing. This Caenorhabditis elegans protein is Protein SWAP (swp-1).